We begin with the raw amino-acid sequence, 392 residues long: Queuine tRNA-ribosyltransferase (392 aa).

D93 acts as the Proton acceptor in catalysis. Substrate-binding positions include 93 to 97 (DSGGY), D147, Q189, and G216. The RNA binding stretch occupies residues 247 to 253 (GVGAPED). Residue D266 is the Nucleophile of the active site. Residues 271-275 (TRVAR) are RNA binding; important for wobble base 34 recognition. Positions 304, 306, 309, and 335 each coordinate Zn(2+).

It belongs to the queuine tRNA-ribosyltransferase family. In terms of assembly, homodimer. Within each dimer, one monomer is responsible for RNA recognition and catalysis, while the other monomer binds to the replacement base PreQ1. The cofactor is Zn(2+).

The enzyme catalyses 7-aminomethyl-7-carbaguanine + guanosine(34) in tRNA = 7-aminomethyl-7-carbaguanosine(34) in tRNA + guanine. The protein operates within tRNA modification; tRNA-queuosine biosynthesis. Its function is as follows. Catalyzes the base-exchange of a guanine (G) residue with the queuine precursor 7-aminomethyl-7-deazaguanine (PreQ1) at position 34 (anticodon wobble position) in tRNAs with GU(N) anticodons (tRNA-Asp, -Asn, -His and -Tyr). Catalysis occurs through a double-displacement mechanism. The nucleophile active site attacks the C1' of nucleotide 34 to detach the guanine base from the RNA, forming a covalent enzyme-RNA intermediate. The proton acceptor active site deprotonates the incoming PreQ1, allowing a nucleophilic attack on the C1' of the ribose to form the product. After dissociation, two additional enzymatic reactions on the tRNA convert PreQ1 to queuine (Q), resulting in the hypermodified nucleoside queuosine (7-(((4,5-cis-dihydroxy-2-cyclopenten-1-yl)amino)methyl)-7-deazaguanosine). This Dehalococcoides mccartyi (strain CBDB1) protein is Queuine tRNA-ribosyltransferase.